The primary structure comprises 369 residues: Molybdenum import ATP-binding protein ModC (369 aa).

Residues 7–243 (PGQAGIHARF…LDLPMAMTDD (237 aa)) enclose the ABC transporter domain. 41–48 (GQSGSGKT) is an ATP binding site. The Mop domain maps to 304-369 (EGSILNVLAV…AQIKAVSLLA (66 aa)).

Belongs to the ABC transporter superfamily. Molybdate importer (TC 3.A.1.8) family. The complex is composed of two ATP-binding proteins (ModC), two transmembrane proteins (ModB) and a solute-binding protein (ModA).

It localises to the cell inner membrane. The enzyme catalyses molybdate(out) + ATP + H2O = molybdate(in) + ADP + phosphate + H(+). Part of the ABC transporter complex ModABC involved in molybdenum import. Responsible for energy coupling to the transport system. This Bordetella bronchiseptica (strain ATCC BAA-588 / NCTC 13252 / RB50) (Alcaligenes bronchisepticus) protein is Molybdenum import ATP-binding protein ModC.